Reading from the N-terminus, the 30-residue chain is Hainantoxin F6-34.84 (30 aa).

2 disulfides stabilise this stretch: Cys2/Cys15 and Cys9/Cys24.

This sequence belongs to the AVIT (prokineticin) family. As to expression, expressed by the venom gland.

Its subcellular location is the secreted. In Cyriopagopus hainanus (Chinese bird spider), this protein is Hainantoxin F6-34.84.